The following is a 437-amino-acid chain: MLLLLARCFLVILASSLLVCPGLACGPGRGFGKRRHPKKLTPLAYKQFIPNVAEKTLGASGRYEGKITRNSERFKELTPNYNPDIIFKDEENTGADRLMTQRCKDKLNALAISVMNQWPGVKLRVTEGWDEDGHHSEESLHYEGRAVDITTSDRDRSKYGMLARLAVEAGFDWVYYESKAHIHCSVKAENSVAAKSGGCFPGSATVHLEQGGTKLVKDLRPGDRVLAADDQGRLLYSDFLTFLDRDEGAKKVFYVIETLEPRERLLLTAAHLLFVAPHNDSGPTPGPSALFASRVRPGQRVYVVAERGGDRRLLPAAVHSVTLREEEAGAYAPLTAHGTILINRVLASCYAVIEEHSWAHRAFAPFRLAHALLAALAPARTDGGGGGSIPAAQSATEARGAEPTAGIHWYSQLLYHIGTWLLDSETMHPLGMAVKSS.

Residues 1–24 (MLLLLARCFLVILASSLLVCPGLA) form the signal peptide. The N-palmitoyl cysteine moiety is linked to residue Cys25. Residues 33 to 39 (KRRHPKK) carry the Cardin-Weintraub motif. 7 residues coordinate Ca(2+): Glu90, Glu91, Asp96, Thr126, Glu127, Asp130, and Asp132. Zn(2+)-binding residues include His141, Asp148, and His183. The Cholesterol glycine ester moiety is linked to residue Gly198. Asn279 carries an N-linked (GlcNAc...) asparagine glycan.

Belongs to the hedgehog family. As to quaternary structure, interacts with HHATL/GUP1 which negatively regulates HHAT-mediated palmitoylation of the SHH N-terminus. Interacts with BOC and CDON. Interacts with HHIP. Interacts with DISP1 via its cholesterol anchor. Interacts with SCUBE2. Interacts with glypican GPC3. Multimer. Post-translationally, the C-terminal domain displays an autoproteolysis activity and a cholesterol transferase activity. Both activities result in the cleavage of the full-length protein and covalent attachment of a cholesterol moiety to the C-terminal of the newly generated N-terminal fragment (ShhN). Cholesterylation is required for the sonic hedgehog protein N-product targeting to lipid rafts and multimerization. ShhN is the active species in both local and long-range signaling, whereas the C-product (ShhC) is degraded in the endoplasmic reticulum. N-palmitoylation by HHAT of ShhN is required for sonic hedgehog protein N-product multimerization and full activity. It is a prerequisite for the membrane-proximal positioning and the subsequent shedding of this N-terminal peptide. In terms of processing, the lipidated N- and C-terminal peptides of ShhNp can be cleaved (shedding). The N-terminal palmitoylated peptide is cleaved at the Cardin-Weintraub (CW) motif site. The cleavage reduced the interactions with heparan sulfate. The cleavage is enhanced by SCUBE2. In terms of tissue distribution, expressed in a number of embryonic tissues including the notochord, ventral neural tube, floor plate, lung bud, zone of polarizing activity and posterior distal mesenchyme of limbs. In the adult, expressed in lung and neural retina.

The protein localises to the endoplasmic reticulum membrane. It is found in the golgi apparatus membrane. The protein resides in the cell membrane. The enzyme catalyses glycyl-L-cysteinyl-[protein] + cholesterol + H(+) = [protein]-C-terminal glycyl cholesterol ester + N-terminal L-cysteinyl-[protein]. Functionally, the C-terminal part of the sonic hedgehog protein precursor displays an autoproteolysis and a cholesterol transferase activity. Both activities result in the cleavage of the full-length protein into two parts (ShhN and ShhC) followed by the covalent attachment of a cholesterol moiety to the C-terminal of the newly generated ShhN. Both activities occur in the reticulum endoplasmic. Once cleaved, ShhC is degraded in the endoplasmic reticulum. In terms of biological role, the dually lipidated sonic hedgehog protein N-product (ShhNp) is a morphogen which is essential for a variety of patterning events during development. Induces ventral cell fate in the neural tube and somites. Involved in the patterning of the anterior-posterior axis of the developing limb bud. Essential for axon guidance. Binds to the patched (PTCH1) receptor, which functions in association with smoothened (SMO), to activate the transcription of target genes. In the absence of SHH, PTCH1 represses the constitutive signaling activity of SMO. This is Sonic hedgehog protein from Mus musculus (Mouse).